The chain runs to 130 residues: Small ribosomal subunit protein uS9 (130 aa).

It belongs to the universal ribosomal protein uS9 family.

The polypeptide is Small ribosomal subunit protein uS9 (Streptococcus pyogenes serotype M1).